The chain runs to 513 residues: Maturase K (513 aa).

This sequence belongs to the intron maturase 2 family. MatK subfamily.

The protein localises to the plastid. It localises to the chloroplast. Functionally, usually encoded in the trnK tRNA gene intron. Probably assists in splicing its own and other chloroplast group II introns. The protein is Maturase K of Zea mays (Maize).